The following is a 301-amino-acid chain: Ornithine carbamoyltransferase (301 aa).

Carbamoyl phosphate is bound by residues 47-50, Q74, R98, and 125-128; these read STRT and HPMQ. L-ornithine contacts are provided by residues N156, D220, and 224–225; that span reads SM. Residues 260 to 261 and R288 each bind carbamoyl phosphate; that span reads CL.

The protein belongs to the aspartate/ornithine carbamoyltransferase superfamily. OTCase family.

Its subcellular location is the cytoplasm. It carries out the reaction carbamoyl phosphate + L-ornithine = L-citrulline + phosphate + H(+). Its pathway is amino-acid biosynthesis; L-arginine biosynthesis; L-arginine from L-ornithine and carbamoyl phosphate: step 1/3. In terms of biological role, reversibly catalyzes the transfer of the carbamoyl group from carbamoyl phosphate (CP) to the N(epsilon) atom of ornithine (ORN) to produce L-citrulline. This chain is Ornithine carbamoyltransferase, found in Picrophilus torridus (strain ATCC 700027 / DSM 9790 / JCM 10055 / NBRC 100828 / KAW 2/3).